Here is a 171-residue protein sequence, read N- to C-terminus: UPF0312 protein MW2606 (171 aa).

This sequence belongs to the UPF0312 family.

This Staphylococcus aureus (strain MW2) protein is UPF0312 protein MW2606.